Consider the following 336-residue polypeptide: MSDKNSSQKNWTSWHHLLHKEILGNKTLIPDGANLLIAVSGGQDSMALLNLINDMKTQHNWFVNVWHGDHQWHKKSAKYALELKSYCNKKNISFFFDQANKNNISSEEKARDWRYKKLSERANQLLIENQKEIDIYLLTGHTNTDNAETFLLNLARGSNYAGLSNINKKRLLKHHIFLIRPLLIFSREDTKKFCQLQNIPIWEDPTNCDLTIKRNIVRKEIIPILETMYPGCSKRINSFAEKMSNYKNEQNDLSKLASLYCEDAIGVKRELLNSLCIEARCTILNTFLKKDCTKQLSSKNLTHLASSILVKDRGKIDLPDGFEIVWNKDYINLEKN.

An ATP-binding site is contributed by 40–45; the sequence is SGGQDS.

The protein belongs to the tRNA(Ile)-lysidine synthase family.

The protein localises to the cytoplasm. The catalysed reaction is cytidine(34) in tRNA(Ile2) + L-lysine + ATP = lysidine(34) in tRNA(Ile2) + AMP + diphosphate + H(+). Its function is as follows. Ligates lysine onto the cytidine present at position 34 of the AUA codon-specific tRNA(Ile) that contains the anticodon CAU, in an ATP-dependent manner. Cytidine is converted to lysidine, thus changing the amino acid specificity of the tRNA from methionine to isoleucine. In Prochlorococcus marinus subsp. pastoris (strain CCMP1986 / NIES-2087 / MED4), this protein is tRNA(Ile)-lysidine synthase.